A 285-amino-acid polypeptide reads, in one-letter code: Pantothenate synthetase (285 aa).

30–37 (MGFLHEGH) serves as a coordination point for ATP. H37 (proton donor) is an active-site residue. Q61 is a (R)-pantoate binding site. Beta-alanine is bound at residue Q61. Residue 147 to 150 (GQKD) participates in ATP binding. A (R)-pantoate-binding site is contributed by Q153. ATP contacts are provided by residues V176 and 184–187 (KSSR).

It belongs to the pantothenate synthetase family. Homodimer.

The protein resides in the cytoplasm. The enzyme catalyses (R)-pantoate + beta-alanine + ATP = (R)-pantothenate + AMP + diphosphate + H(+). Its pathway is cofactor biosynthesis; (R)-pantothenate biosynthesis; (R)-pantothenate from (R)-pantoate and beta-alanine: step 1/1. Its function is as follows. Catalyzes the condensation of pantoate with beta-alanine in an ATP-dependent reaction via a pantoyl-adenylate intermediate. This Listeria welshimeri serovar 6b (strain ATCC 35897 / DSM 20650 / CCUG 15529 / CIP 8149 / NCTC 11857 / SLCC 5334 / V8) protein is Pantothenate synthetase.